The chain runs to 34 residues: U4-theraphotoxin-Hs1a (34 aa).

3 cysteine pairs are disulfide-bonded: Cys-3-Cys-17, Cys-10-Cys-22, and Cys-16-Cys-33.

Belongs to the neurotoxin 14 (magi-1) family. 05 (ICK-7) subfamily. Expressed by the venom gland.

It is found in the secreted. Intracisternal injection paralyzes mice. In Cyriopagopus schmidti (Chinese bird spider), this protein is U4-theraphotoxin-Hs1a.